Consider the following 151-residue polypeptide: MVNKVVAENRKARFNYEIIDTYEAGIVLMGTEVKSLREGKANIAESYASDEGGEIWLINSYLPEYLQANRFNHEPRRRRKLLLSGREIHRLRSAINREGMTLIPLKIYFNDRGRAKMELALAKGKKLHDKRESEKERDWNRQKSRLLKAHG.

Positions 124-151 (GKKLHDKRESEKERDWNRQKSRLLKAHG) are disordered. Residues 129–141 (DKRESEKERDWNR) are compositionally biased toward basic and acidic residues. Residues 142 to 151 (QKSRLLKAHG) are compositionally biased toward basic residues.

The protein belongs to the SmpB family.

The protein localises to the cytoplasm. Functionally, required for rescue of stalled ribosomes mediated by trans-translation. Binds to transfer-messenger RNA (tmRNA), required for stable association of tmRNA with ribosomes. tmRNA and SmpB together mimic tRNA shape, replacing the anticodon stem-loop with SmpB. tmRNA is encoded by the ssrA gene; the 2 termini fold to resemble tRNA(Ala) and it encodes a 'tag peptide', a short internal open reading frame. During trans-translation Ala-aminoacylated tmRNA acts like a tRNA, entering the A-site of stalled ribosomes, displacing the stalled mRNA. The ribosome then switches to translate the ORF on the tmRNA; the nascent peptide is terminated with the 'tag peptide' encoded by the tmRNA and targeted for degradation. The ribosome is freed to recommence translation, which seems to be the essential function of trans-translation. The polypeptide is SsrA-binding protein (Rhizobium johnstonii (strain DSM 114642 / LMG 32736 / 3841) (Rhizobium leguminosarum bv. viciae)).